Consider the following 103-residue polypeptide: Large ribosomal subunit protein bL21 (103 aa).

The protein belongs to the bacterial ribosomal protein bL21 family. As to quaternary structure, part of the 50S ribosomal subunit. Contacts protein L20.

In terms of biological role, this protein binds to 23S rRNA in the presence of protein L20. The chain is Large ribosomal subunit protein bL21 from Bordetella parapertussis (strain 12822 / ATCC BAA-587 / NCTC 13253).